Here is a 789-residue protein sequence, read N- to C-terminus: Bifunctional purine biosynthetic protein PUR2,5 (789 aa).

The GARS stretch occupies residues 1–428; that stretch reads MEKINVLVVG…NRTDIAHRAF (428 aa). The 208-residue stretch at 114-321 folds into the ATP-grasp domain; that stretch reads KDFMKKHNIP…LLELMLATVE (208 aa). 140 to 201 provides a ligand contact to ATP; it reads IANSSHNLVI…EEFLEGDELS (62 aa). Mg(2+) is bound by residues E291 and N293. The AIRS stretch occupies residues 438 to 773; the sequence is LTYEDAGVSV…TVYTIGKLVE (336 aa).

The protein in the N-terminal section; belongs to the GARS family. This sequence in the C-terminal section; belongs to the AIR synthase family. The cofactor is Mg(2+). It depends on Mn(2+) as a cofactor.

It is found in the cytoplasm. The protein resides in the cytosol. It catalyses the reaction 2-formamido-N(1)-(5-O-phospho-beta-D-ribosyl)acetamidine + ATP = 5-amino-1-(5-phospho-beta-D-ribosyl)imidazole + ADP + phosphate + H(+). It carries out the reaction 5-phospho-beta-D-ribosylamine + glycine + ATP = N(1)-(5-phospho-beta-D-ribosyl)glycinamide + ADP + phosphate + H(+). The protein operates within purine metabolism; IMP biosynthesis via de novo pathway; 5-amino-1-(5-phospho-D-ribosyl)imidazole from N(2)-formyl-N(1)-(5-phospho-D-ribosyl)glycinamide: step 2/2. Its pathway is purine metabolism; IMP biosynthesis via de novo pathway; N(1)-(5-phospho-D-ribosyl)glycinamide from 5-phospho-alpha-D-ribose 1-diphosphate: step 2/2. In terms of biological role, catalyzes the second and fifth step in the 'de novo' purine biosynthesis pathway; contains phosphoribosylamine--glycine ligase (GARS) and phosphoribosylformylglycinamidine cyclo-ligase (AIRS) activities. This is Bifunctional purine biosynthetic protein PUR2,5 from Pichia angusta (Yeast).